Here is an 873-residue protein sequence, read N- to C-terminus: Potassium voltage-gated channel subfamily KQT member 3 (873 aa).

Residues 1 to 41 (MGLKARRAAGAAGGGGGEGGGGGGGAANPAGGDSAVAGDEE) form a disordered region. The Cytoplasmic portion of the chain corresponds to 1-121 (MGLKARRAAG…IYDALERPRG (121 aa)). Residues 11 to 26 (AAGGGGGEGGGGGGGA) show a composition bias toward gly residues. A Phosphothreonine modification is found at Thr-82. A helical membrane pass occupies residues 122 to 144 (WALLYHALVFLIVLGCLILAVLT). At 145-154 (TFKEYETVSG) the chain is on the extracellular side. The chain crosses the membrane as a helical span at residues 155-176 (DWLLLLETFAIFIFGAEFALRI). The Cytoplasmic portion of the chain corresponds to 177-194 (WAAGCCCRYKGWRGRLKF). The helical transmembrane segment at 195 to 214 (ARKPLCMLDIFVLIASVPVV) threads the bilayer. At 215–226 (AVGNQGNVLATS) the chain is on the extracellular side. Residues 227 to 245 (LRSLRFLQILRMLRMDRRG) form a helical; Voltage-sensor membrane-spanning segment. Arg-244 serves as a coordination point for a 1,2-diacyl-sn-glycero-3-phospho-(1D-myo-inositol-4,5-bisphosphate). Over 246 to 257 (GTWKLLGSAICA) the chain is Cytoplasmic. The helical transmembrane segment at 258–283 (HSKELITAWYIGFLTLILSSFLVYLV) threads the bilayer. Lys-260 contacts a 1,2-diacyl-sn-glycero-3-phospho-(1D-myo-inositol-4,5-bisphosphate). Topologically, residues 284–303 (EKDVPEMDAQGEEMKEEFET) are extracellular. Positions 304 to 316 (YADALWWGLITLA) form an intramembrane region, pore-forming. Positions 317-322 (TIGYGD) match the Selectivity filter motif. Residues 317 to 327 (TIGYGDKTPKT) are Extracellular-facing. Residues 328–354 (WEGRLIAATFSLIGVSFFALPAGILGS) traverse the membrane as a helical segment. Topologically, residues 355-873 (GLALKVQEQH…SIWTPSNKPT (519 aa)) are cytoplasmic. Residues 357 to 538 (ALKVQEQHRQ…RLYKKKFKET (182 aa)) form a mediates interaction with calmodulin region. Lys-367 provides a ligand contact to a 1,2-diacyl-sn-glycero-3-phospho-(1D-myo-inositol-4,5-bisphosphate). 3 disordered regions span residues 575–603 (PGPP…PRNE), 723–742 (RGGP…GSTY), and 766–873 (ELQG…NKPT). Polar residues-rich tracts occupy residues 588 to 601 (KGSA…QSPR), 725 to 741 (GPSS…SGST), and 844 to 873 (DPFT…NKPT).

Belongs to the potassium channel family. KQT (TC 1.A.1.15) subfamily. Kv7.3/KCNQ3 sub-subfamily. As to quaternary structure, heterotetramer with KCNQ2; forms heterotetrameric native M-channel responsible for the M-current. Interacts with calmodulin; the interaction is calcium-independent, constitutive and participates in the proper assembly of a functional M-channel. Heteromultimer with KCNQ5. May associate with KCNE2. Interacts with IQCJ-SCHIP1. Interacts (via the pore module) with SLC5A3/SMIT1; forms a coregulatory complex that alters ion selectivity, voltage dependence and gating kinetics of the channel. KCNQ2/KCNQ3 are ubiquitinated by NEDD4L. Ubiquitination leads to protein degradation. Degradation induced by NEDD4L is inhibited by USP36. In terms of tissue distribution, expressed in dorsal root ganglion (DRG) neurons.

Its subcellular location is the cell membrane. It carries out the reaction K(+)(in) = K(+)(out). It catalyses the reaction Rb(+)(in) = Rb(+)(out). The enzyme catalyses Cs(+)(in) = Cs(+)(out). The catalysed reaction is Na(+)(in) = Na(+)(out). Its activity is regulated as follows. Phosphatidylinositol-4,5-bisphosphate (PIP2) potentiates the activation of KCNQ channels by enhancing the electro-mechanical coupling of the voltage-sensing domain (VSD) and the pore-forming domain (PD). In the closed state of the channel, PIP2 is anchored at the S2-S3 loop; upon channel activation, PIP2 interacts with the S4-S5 linker and is involved in channel gating. Calcium suppresses KCNQ2-KCNQ3 channel currents, with calcium-bound calmodulin inducing a change in channel configuration which leads to the reduction of channel affinity for PIP2 and subsequent current suppression. Its function is as follows. Pore-forming subunit of the voltage-gated potassium (Kv) M-channel which is responsible for the M-current, a key controller of neuronal excitability. M-channel is composed of pore-forming subunits KCNQ2 and KCNQ3 assembled as heterotetramers. The native M-current has a slowly activating and deactivating potassium conductance which plays a critical role in determining the subthreshold electrical excitability of neurons as well as the responsiveness to synaptic inputs. M-channel is selectively permeable in vitro to other cations besides potassium, in decreasing order of affinity K(+) &gt; Rb(+) &gt; Cs(+) &gt; Na(+). M-channel association with SLC5A3/SMIT1 alters channel ion selectivity, increasing Na(+) and Cs(+) permeation relative to K(+). Suppressed by activation of M1 muscarinic acetylcholine receptors. KCNQ3 also associates with KCNQ5 to form a functional channel in vitro and may also contribute to the M-current in brain. The polypeptide is Potassium voltage-gated channel subfamily KQT member 3 (Mus musculus (Mouse)).